Here is a 236-residue protein sequence, read N- to C-terminus: Purine nucleoside phosphorylase DeoD-type (236 aa).

Position 5 (histidine 5) interacts with a purine D-ribonucleoside. Phosphate-binding positions include glycine 21, arginine 25, arginine 44, and 88-91 (RVGT). A purine D-ribonucleoside is bound by residues 180–182 (EME) and 204–205 (SD). Aspartate 205 (proton donor) is an active-site residue.

Belongs to the PNP/UDP phosphorylase family. Homohexamer; trimer of homodimers.

The catalysed reaction is a purine D-ribonucleoside + phosphate = a purine nucleobase + alpha-D-ribose 1-phosphate. It carries out the reaction a purine 2'-deoxy-D-ribonucleoside + phosphate = a purine nucleobase + 2-deoxy-alpha-D-ribose 1-phosphate. Its function is as follows. Catalyzes the reversible phosphorolytic breakdown of the N-glycosidic bond in the beta-(deoxy)ribonucleoside molecules, with the formation of the corresponding free purine bases and pentose-1-phosphate. This chain is Purine nucleoside phosphorylase DeoD-type, found in Shewanella baltica (strain OS223).